The sequence spans 267 residues: Tryptophan synthase alpha chain (267 aa).

Catalysis depends on proton acceptor residues E49 and D60.

The protein belongs to the TrpA family. As to quaternary structure, tetramer of two alpha and two beta chains.

The enzyme catalyses (1S,2R)-1-C-(indol-3-yl)glycerol 3-phosphate + L-serine = D-glyceraldehyde 3-phosphate + L-tryptophan + H2O. The protein operates within amino-acid biosynthesis; L-tryptophan biosynthesis; L-tryptophan from chorismate: step 5/5. In terms of biological role, the alpha subunit is responsible for the aldol cleavage of indoleglycerol phosphate to indole and glyceraldehyde 3-phosphate. The polypeptide is Tryptophan synthase alpha chain (Methylococcus capsulatus (strain ATCC 33009 / NCIMB 11132 / Bath)).